The sequence spans 130 residues: Histone H2A type 2-B (130 aa).

The interval 1 to 22 is disordered; that stretch reads MSGRGKQGGKARAKAKSRSSRA. N-acetylserine is present on Ser2. Residue Ser2 is modified to Phosphoserine; by RPS6KA5. Citrulline; alternate is present on Arg4. Arg4 carries the post-translational modification Symmetric dimethylarginine; by PRMT5; alternate. At Lys6 the chain carries N6-(2-hydroxyisobutyryl)lysine. A compositionally biased stretch (basic residues) spans 7–19; that stretch reads QGGKARAKAKSRS. At Lys10 the chain carries N6-(2-hydroxyisobutyryl)lysine; alternate. 2 positions are modified to N6-(beta-hydroxybutyryl)lysine; alternate: Lys10 and Lys14. Lys10 is subject to N6-lactoyllysine; alternate. Lys10 bears the N6-succinyllysine; alternate mark. A Glycyl lysine isopeptide (Lys-Gly) (interchain with G-Cter in ubiquitin); alternate cross-link involves residue Lys14. Lys16 participates in a covalent cross-link: Glycyl lysine isopeptide (Lys-Gly) (interchain with G-Cter in ubiquitin). N6-(2-hydroxyisobutyryl)lysine; alternate is present on Lys37. Lys37 carries the post-translational modification N6-(beta-hydroxybutyryl)lysine; alternate. Lys37 carries the N6-crotonyllysine; alternate modification. Residues Lys75 and Lys76 each carry the N6-(2-hydroxyisobutyryl)lysine modification. Lys96 bears the N6-(2-hydroxyisobutyryl)lysine; alternate mark. At Lys96 the chain carries N6-(beta-hydroxybutyryl)lysine; alternate. An N6-succinyllysine; alternate modification is found at Lys96. N6-glutaryllysine; alternate is present on Lys96. Residue Gln105 is modified to N5-methylglutamine. Lys119 bears the N6-(2-hydroxyisobutyryl)lysine; alternate mark. Position 119 is an N6-(beta-hydroxybutyryl)lysine; alternate (Lys119). N6-crotonyllysine; alternate is present on residues Lys119 and Lys120. An N6-glutaryllysine; alternate mark is found at Lys119 and Lys120. A Glycyl lysine isopeptide (Lys-Gly) (interchain with G-Cter in ubiquitin); alternate cross-link involves residue Lys120. Thr121 carries the post-translational modification Phosphothreonine; by DCAF1.

The protein belongs to the histone H2A family. The nucleosome is a histone octamer containing two molecules each of H2A, H2B, H3 and H4 assembled in one H3-H4 heterotetramer and two H2A-H2B heterodimers. The octamer wraps approximately 147 bp of DNA. Deiminated on Arg-4 in granulocytes upon calcium entry. In terms of processing, monoubiquitination of Lys-120 (H2AK119Ub) by RING1, TRIM37 and RNF2/RING2 complex gives a specific tag for epigenetic transcriptional repression and participates in X chromosome inactivation of female mammals. It is involved in the initiation of both imprinted and random X inactivation. Ubiquitinated H2A is enriched in inactive X chromosome chromatin. Ubiquitination of H2A functions downstream of methylation of 'Lys-27' of histone H3 (H3K27me). H2AK119Ub by RNF2/RING2 can also be induced by ultraviolet and may be involved in DNA repair. Monoubiquitination of Lys-120 (H2AK119Ub) by TRIM37 may promote transformation of cells in a number of breast cancers. Following DNA double-strand breaks (DSBs), it is ubiquitinated through 'Lys-63' linkage of ubiquitin moieties by the E2 ligase UBE2N and the E3 ligases RNF8 and RNF168, leading to the recruitment of repair proteins to sites of DNA damage. Ubiquitination at Lys-14 and Lys-16 (H2AK13Ub and H2AK15Ub, respectively) in response to DNA damage is initiated by RNF168 that mediates monoubiquitination at these 2 sites, and 'Lys-63'-linked ubiquitin are then conjugated to monoubiquitin; RNF8 is able to extend 'Lys-63'-linked ubiquitin chains in vitro. Deubiquitinated by USP51 at Lys-14 and Lys-16 (H2AK13Ub and H2AK15Ub, respectively) after damaged DNA is repaired. H2AK119Ub and ionizing radiation-induced 'Lys-63'-linked ubiquitination (H2AK13Ub and H2AK15Ub) are distinct events. Post-translationally, phosphorylation on Ser-2 (H2AS1ph) is enhanced during mitosis. Phosphorylation on Ser-2 by RPS6KA5/MSK1 directly represses transcription. Acetylation of H3 inhibits Ser-2 phosphorylation by RPS6KA5/MSK1. Phosphorylation at Thr-121 (H2AT120ph) by DCAF1 is present in the regulatory region of many tumor suppresor genes and down-regulates their transcription. Symmetric dimethylation on Arg-4 by the PRDM1/PRMT5 complex may play a crucial role in the germ-cell lineage. In terms of processing, glutamine methylation at Gln-105 (H2AQ104me) by FBL is specifically dedicated to polymerase I. It is present at 35S ribosomal DNA locus and impairs binding of the FACT complex. Post-translationally, crotonylation (Kcr) is specifically present in male germ cells and marks testis-specific genes in post-meiotic cells, including X-linked genes that escape sex chromosome inactivation in haploid cells. Crotonylation marks active promoters and enhancers and confers resistance to transcriptional repressors. It is also associated with post-meiotically activated genes on autosomes. Lactylated in macrophages by EP300/P300 by using lactoyl-CoA directly derived from endogenous or exogenous lactate, leading to stimulates gene transcription.

Its subcellular location is the nucleus. The protein resides in the chromosome. Functionally, core component of nucleosome. Nucleosomes wrap and compact DNA into chromatin, limiting DNA accessibility to the cellular machineries which require DNA as a template. Histones thereby play a central role in transcription regulation, DNA repair, DNA replication and chromosomal stability. DNA accessibility is regulated via a complex set of post-translational modifications of histones, also called histone code, and nucleosome remodeling. The chain is Histone H2A type 2-B from Homo sapiens (Human).